A 449-amino-acid polypeptide reads, in one-letter code: Chromosomal replication initiator protein DnaA (449 aa).

The domain I, interacts with DnaA modulators stretch occupies residues 1–72 (MPNLEELWAY…VEGVYEFAQL (72 aa)). The domain II stretch occupies residues 72–109 (LEVDPVIMTKDELQPAPATDQRPAVEEDDQNLTFKAKT). Residues 110-326 (HLNPKYTFDR…GALVRVQAFS (217 aa)) are domain III, AAA+ region. 4 residues coordinate ATP: Gly154, Gly156, Lys157, and Thr158. A domain IV, binds dsDNA region spans residues 327–449 (TMKNEDITTS…ELRNILKNRG (123 aa)).

It belongs to the DnaA family. In terms of assembly, oligomerizes as a right-handed, spiral filament on DNA at oriC.

The protein resides in the cytoplasm. Its function is as follows. Plays an essential role in the initiation and regulation of chromosomal replication. ATP-DnaA binds to the origin of replication (oriC) to initiate formation of the DNA replication initiation complex once per cell cycle. Binds the DnaA box (a 9 base pair repeat at the origin) and separates the double-stranded (ds)DNA. Forms a right-handed helical filament on oriC DNA; dsDNA binds to the exterior of the filament while single-stranded (ss)DNA is stabiized in the filament's interior. The ATP-DnaA-oriC complex binds and stabilizes one strand of the AT-rich DNA unwinding element (DUE), permitting loading of DNA polymerase. After initiation quickly degrades to an ADP-DnaA complex that is not apt for DNA replication. Binds acidic phospholipids. This Lacticaseibacillus casei (strain BL23) (Lactobacillus casei) protein is Chromosomal replication initiator protein DnaA.